Consider the following 107-residue polypeptide: MASGAARWLVLAPVRSGALRSGPSLRKDGDVSAAWSGSGRSLVPSRSVIVTRSGAILPKPVKMSFGLLRVFSIVIPFLYVGTLISKNFAALLEEHDIFVPEDDDDDD.

The N-terminal 52 residues, 1 to 52, are a transit peptide targeting the mitochondrion; it reads MASGAARWLVLAPVRSGALRSGPSLRKDGDVSAAWSGSGRSLVPSRSVIVTR. The interaction with MAIP1 stretch occupies residues 1-52; sequence MASGAARWLVLAPVRSGALRSGPSLRKDGDVSAAWSGSGRSLVPSRSVIVTR. At 54–65 the chain is on the mitochondrial matrix side; sequence GAILPKPVKMSF. A helical membrane pass occupies residues 66–85; the sequence is GLLRVFSIVIPFLYVGTLIS. Positions 81 to 85 match the GXXXX[G/A/S] motif; the sequence is GTLIS. Residues 86–107 are Mitochondrial intermembrane-facing; the sequence is KNFAALLEEHDIFVPEDDDDDD.

This sequence belongs to the SMDT1/EMRE family. Component of the uniplex complex, composed of MCU, EMRE/SMDT1, MICU1 and MICU2 (or MICU3) in a 4:4:1:1 stoichiometry. The number of EMRE/SMDT1 molecules is hovewer variable, ranging from 1 to 4 copies per uniplex complex, leading to uniplex complexes with distinct gatekeeping profiles. Interacts (via its C-terminal poly-Asp tail) with MCUR1; the interaction is direct. Unprocessed form interacts (via transit peptide) with MAIP1. In terms of processing, undergoes proteolytic degradation in neurons: degraded by AFG3L2 and SPG7 before SMDT1/EMRE assembly with the uniporter complex, limiting the availability of SMDT1/EMRE for MCU assembly and promoting efficient assembly of gatekeeper subunits with MCU.

It localises to the mitochondrion inner membrane. Its function is as follows. Essential regulatory subunit of the mitochondrial calcium uniporter complex (uniplex), a complex that mediates calcium uptake into mitochondria. Required to bridge the calcium-sensing proteins MICU1 with the calcium-conducting subunit MCU. Acts by mediating activation of MCU and retention of MICU1 to the MCU pore, in order to ensure tight regulation of the uniplex complex and appropriate responses to intracellular calcium signaling. The sequence is that of Essential MCU regulator, mitochondrial from Homo sapiens (Human).